Reading from the N-terminus, the 219-residue chain is Lipid transferase CIDEA (219 aa).

Positions 33–110 (PARPFRVSNH…ILEKGQKWMP (78 aa)) constitute a CIDE-N domain. The interval 163-180 (CTGLKGLLRSLLRFLSYS) is amphipathic helix.

It belongs to the CIDE family. Homodimer. Interacts with CIDEC. Directly interacts with CEBPB. Interacts with isoform CLSTN3beta of CLSTN3; inhibiting the lipid transferase activity of CIDEA. As to expression, expressed in omental and subcutaneous adipose tissue (at protein level).

The protein resides in the lipid droplet. Its subcellular location is the nucleus. The enzyme catalyses a triacyl-sn-glycerol(in) = a triacyl-sn-glycerol(out). In terms of biological role, lipid transferase that promotes unilocular lipid droplet formation by mediating lipid droplet fusion. Lipid droplet fusion promotes their enlargement, restricting lipolysis and favoring lipid storage. Localizes on the lipid droplet surface, at focal contact sites between lipid droplets, and mediates atypical lipid droplet fusion by promoting directional net neutral lipid transfer from the smaller to larger lipid droplets. The transfer direction may be driven by the internal pressure difference between the contacting lipid droplet pair and occurs at a lower rate than that promoted by CIDEC. May also act as a CEBPB coactivator in epithelial cells to control the expression of a subset of CEBPB downstream target genes, including ID2, IGF1, PRLR, SOCS1, SOCS3, XDH, but not casein. By interacting with CEBPB, strengthens the association of CEBPB with the XDH promoter, increases histone acetylation and dissociates HDAC1 from the promoter. When overexpressed, induces apoptosis; the physiological significance of its role in apoptosis is unclear. This chain is Lipid transferase CIDEA, found in Homo sapiens (Human).